Consider the following 592-residue polypeptide: Aspartate--tRNA ligase (592 aa).

Glutamate 173 serves as a coordination point for L-aspartate. An aspartate region spans residues 197–200 (QLFK). Arginine 219 is an L-aspartate binding site. ATP-binding positions include 219-221 (RDE) and glutamine 228. Histidine 448 is an L-aspartate binding site. An ATP-binding site is contributed by glutamate 482. Residue arginine 489 participates in L-aspartate binding. 534–537 (GLDR) lines the ATP pocket.

This sequence belongs to the class-II aminoacyl-tRNA synthetase family. Type 1 subfamily. Homodimer.

It localises to the cytoplasm. It catalyses the reaction tRNA(Asp) + L-aspartate + ATP = L-aspartyl-tRNA(Asp) + AMP + diphosphate. Functionally, catalyzes the attachment of L-aspartate to tRNA(Asp) in a two-step reaction: L-aspartate is first activated by ATP to form Asp-AMP and then transferred to the acceptor end of tRNA(Asp). This Shewanella baltica (strain OS155 / ATCC BAA-1091) protein is Aspartate--tRNA ligase.